Here is a 303-residue protein sequence, read N- to C-terminus: Probable 5-dehydro-4-deoxyglucarate dehydratase (303 aa).

This sequence belongs to the DapA family.

The enzyme catalyses 5-dehydro-4-deoxy-D-glucarate + H(+) = 2,5-dioxopentanoate + CO2 + H2O. Its pathway is carbohydrate acid metabolism; D-glucarate degradation; 2,5-dioxopentanoate from D-glucarate: step 2/2. The polypeptide is Probable 5-dehydro-4-deoxyglucarate dehydratase (Pseudomonas syringae pv. tomato (strain ATCC BAA-871 / DC3000)).